We begin with the raw amino-acid sequence, 257 residues long: Transmembrane protein 101 (257 aa).

Transmembrane regions (helical) follow at residues 21–40, 52–72, 77–97, 110–130, 139–159, 182–202, 206–226, and 233–253; these read VLLT…LYAE, VPYL…MSFG, WFAL…YIGG, YSRT…AGEL, SLQS…AYSL, LFFV…YVTL, ILAV…AYWH, and FWNQ…AVIL.

Its subcellular location is the membrane. In terms of biological role, may activate NF-kappa-B signaling pathways. The polypeptide is Transmembrane protein 101 (TMEM101) (Homo sapiens (Human)).